The sequence spans 469 residues: MALQTDTHAWRVEIGTRGLMFSNCVPLHLPEGQYHKLRLPVSAYEALAVARYGLVGSLWEVPAVNSALQCLAAAAPCKDVKIYPSCIFQVHAPMFVTIKTSLRCLNPHDLCLCLICVGAAILDIPLLCAPRDGAGARAAEGQAAAAQGGKLRVWGRLSPSSPISLSLAFPYAGPPPVAWYRHSIKLTRSEGVGIGKDCAQDHACPVPPQGHASSAADQAGVPERGRKRAHEGPGAGEAASAGRGDVALSQSRALLWRGLGWDTGRGRLAPGLAMSRDAASGSVHLDIQVDRAEEGWVCDVLLEPGPPTAREGCFLSMDPGLVTLKDAWTLFPLHPEHDAVVPPKEEIHVMAQGHLQGGTPSLWGFTFQEAACDQWVLRPRVWTAHSPIKMTVYNCGHKPLHIGPSTRLGLALFWPAERSDNLDAGRIFYQLTSGELYWGRTVARPPTLTLPVDELRPWPKLTPEEPMQH.

The tract at residues 203-244 (ACPVPPQGHASSAADQAGVPERGRKRAHEGPGAGEAASAGRG) is disordered.

The protein belongs to the epstein-barr virus LF1 family.

This is an uncharacterized protein from Epstein-Barr virus (strain AG876) (HHV-4).